Reading from the N-terminus, the 1348-residue chain is ABC multidrug transporter atrD (1348 aa).

Residues 1–10 are compositionally biased toward polar residues; it reads MSPLETNPLS. The segment at 1–67 is disordered; the sequence is MSPLETNPLS…HRPKSSSSNN (67 aa). Over residues 20 to 31 the composition is skewed to low complexity; that stretch reads ETSTTEEQASTP. The N-linked (GlcNAc...) asparagine glycan is linked to Asn99. The next 4 membrane-spanning stretches (helical) occupy residues 114–134, 168–188, 240–260, and 268–288; these read ILIM…LPLF, YFVY…VGFI, KVGL…IAYV, and ICSS…QFII. Residues 118-408 enclose the ABC transmembrane type-1 1 domain; sequence VISTICAIAA…VSPNAQAFTN (291 aa). Asn314 carries N-linked (GlcNAc...) asparagine glycosylation. Transmembrane regions (helical) follow at residues 344 to 364 and 371 to 391; these read IVMG…YGLG and FLVD…AILI. One can recognise an ABC transporter 1 domain in the interval 443 to 688; it reads IELRNVKHIY…GGAYRKLVEA (246 aa). 478–485 is an ATP binding site; sequence GPSGSGKS. Asn550 carries an N-linked (GlcNAc...) asparagine glycan. Transmembrane regions (helical) follow at residues 778-798 and 825-845; these read MLIG…QAVL and LMFF…GAAF. The 290-residue stretch at 779 to 1068 folds into the ABC transmembrane type-1 2 domain; sequence LIGLVFSVLA…VFSFAPDMGK (290 aa). Asn877 carries N-linked (GlcNAc...) asparagine glycosylation. The next 4 membrane-spanning stretches (helical) occupy residues 892–912, 925–947, 1015–1035, and 1042–1062; these read HLSG…TTLG, LALV…FYML, ALVF…LGHH, and FFVC…VFSF. Residue Asn1088 is glycosylated (N-linked (GlcNAc...) asparagine). One can recognise an ABC transporter 2 domain in the interval 1103-1341; that stretch reads IEFRNVHFRY…KGRYYELVNL (239 aa). 1138 to 1145 is an ATP binding site; sequence GPSGCGKS.

Belongs to the ABC transporter superfamily. ABCB family. Multidrug resistance exporter (TC 3.A.1.201) subfamily.

Its subcellular location is the cell membrane. Fenamirol efflux transporter activity is inhibited by the cyclosporin derivative PSC 833, nigericin, reserpine and valinomycin. The effect of reserpine is transiant, while that of the cyclosporin derivative PSC 833, nigericin and valinomycin is proportional to the time of exposure. Cyclohexinmide has inhibitory effect only when applied prior to addition of the fungicide. Functionally, pleiotropic ABC efflux transporter involved in the protection of the cells against a wide range of toxic compounds. Confers resistance to the azole fenarimol via efflux transport. May also be involved in the secretion of penicillin. The polypeptide is ABC multidrug transporter atrD (Emericella nidulans (Aspergillus nidulans)).